The chain runs to 115 residues: U3-lycotoxin-Ls1l (115 aa).

The signal sequence occupies residues 1–20 (MKFVLLFGVLLVTLFSYSSA). The propeptide occupies 21–44 (EMLDDFDQADEDELLSLIEKEEAR). Cystine bridges form between C55/C72, C62/C87, and C74/C85.

The protein belongs to the neurotoxin 19 (CSTX) family. 01 subfamily. Expressed by the venom gland.

Its subcellular location is the secreted. This is U3-lycotoxin-Ls1l from Lycosa singoriensis (Wolf spider).